The sequence spans 325 residues: Putative gluconeogenesis factor (325 aa).

It belongs to the gluconeogenesis factor family.

The protein resides in the cytoplasm. In terms of biological role, required for morphogenesis under gluconeogenic growth conditions. This Streptococcus pyogenes serotype M3 (strain ATCC BAA-595 / MGAS315) protein is Putative gluconeogenesis factor.